The sequence spans 356 residues: Probable neutral protease 2 homolog ARB_04769 (356 aa).

Residues 1–17 form the signal peptide; the sequence is MQFTALLAALGAPLALA. Positions 18-183 are excised as a propeptide; sequence ASIPAAAHNH…DDSTGVIDKR (166 aa). 2 disulfide bridges follow: Cys-191–Cys-262 and Cys-269–Cys-287. N-linked (GlcNAc...) asparagine glycosylation occurs at Asn-205. Residue His-311 coordinates Zn(2+). The active site involves Glu-312. The Zn(2+) site is built by His-315 and Asp-326.

Belongs to the peptidase M35 family. Zn(2+) serves as cofactor.

It localises to the secreted. The catalysed reaction is Preferential cleavage of bonds with hydrophobic residues in P1'. Also 3-Asn-|-Gln-4 and 8-Gly-|-Ser-9 bonds in insulin B chain.. In terms of biological role, probable secreted metalloprotease that shows high activities on basic nuclear substrates such as histone and protamine. May be involved in virulence. This Arthroderma benhamiae (strain ATCC MYA-4681 / CBS 112371) (Trichophyton mentagrophytes) protein is Probable neutral protease 2 homolog ARB_04769.